A 321-amino-acid chain; its full sequence is uncharacterized protein (321 aa).

The active-site Proton donor is the Tyr-60. Position 118 (His-118) interacts with substrate.

Belongs to the aldo/keto reductase family.

This is an uncharacterized protein from Schizosaccharomyces pombe (strain 972 / ATCC 24843) (Fission yeast).